We begin with the raw amino-acid sequence, 433 residues long: MTDIFNITHSEEVFSSALKLMPGGVSSPVRAFKSVGGQPIVFDRVKGPFAWDVDGNRYIDYIGSWGPAICGHAHPEVITALQEAIEKGTSFGAPCVQENKLAEMVIDAVPSVEMVRFVNSGTEACMAVLRLMRAFTGRDKVIKFDGCYHGHADMFLVKAGSGVATLGLPDSPGVPRTTTANTLTAPYNDLEAVKKLFSENPDAISGVILEPIVGNAGFITPEPGFLEGLRELTTENGSLLVFDEVMTGFRISYGGAQEKFGVTPDLTTLGKVIGGGLPVGAYGGRKEIMSMVAPSGPVYQAGTLSGNPLAMTAGIKTLELLKQEGTYEKMGLATSRLIEGIMQSAENNGIAINGGSVSAMFGFFLCEGPVRNFEEAKTNNSELFGKLHREMIKRGVYLAPSPFEAGFTSLAHSEEEIDRTIEAFDQSFSVIKN.

The residue at position 271 (Lys271) is an N6-(pyridoxal phosphate)lysine.

Belongs to the class-III pyridoxal-phosphate-dependent aminotransferase family. HemL subfamily. Homodimer. It depends on pyridoxal 5'-phosphate as a cofactor.

It is found in the cytoplasm. It catalyses the reaction (S)-4-amino-5-oxopentanoate = 5-aminolevulinate. Its pathway is porphyrin-containing compound metabolism; protoporphyrin-IX biosynthesis; 5-aminolevulinate from L-glutamyl-tRNA(Glu): step 2/2. It participates in porphyrin-containing compound metabolism; chlorophyll biosynthesis. In Prochlorococcus marinus (strain MIT 9515), this protein is Glutamate-1-semialdehyde 2,1-aminomutase.